The sequence spans 140 residues: ATP synthase epsilon chain (140 aa).

The protein belongs to the ATPase epsilon chain family. F-type ATPases have 2 components, CF(1) - the catalytic core - and CF(0) - the membrane proton channel. CF(1) has five subunits: alpha(3), beta(3), gamma(1), delta(1), epsilon(1). CF(0) has three main subunits: a, b and c.

The protein localises to the cell inner membrane. In terms of biological role, produces ATP from ADP in the presence of a proton gradient across the membrane. This chain is ATP synthase epsilon chain, found in Herminiimonas arsenicoxydans.